The primary structure comprises 145 residues: Hydrophobin-like protein 1 (145 aa).

A signal peptide spans 1 to 20; that stretch reads MYLLQISISLLLLISTAATA. N36 carries N-linked (GlcNAc...) asparagine glycosylation. 4 disulfide bridges follow: C61–C121, C71–C113, C72–C104, and C122–C139.

Its subcellular location is the secreted. It is found in the cell wall. Functionally, aerial growth, conidiation, and dispersal of filamentous fungi in the environment rely upon a capability of their secreting small amphipathic proteins called hydrophobins (HPBs) with low sequence identity. Class I can self-assemble into an outermost layer of rodlet bundles on aerial cell surfaces, conferring cellular hydrophobicity that supports fungal growth, development and dispersal; whereas Class II form highly ordered films at water-air interfaces through intermolecular interactions but contribute nothing to the rodlet structure. In Botryotinia fuckeliana, hydrophobins are not involved in conferring surface hydrophobicity to conidia and aerial hyphae and their function in sclerotia and fruiting bodies remains to be investigated. The protein is Hydrophobin-like protein 1 of Botryotinia fuckeliana (strain B05.10) (Noble rot fungus).